Reading from the N-terminus, the 646-residue chain is Anoctamin-10 (646 aa).

A run of 8 helical transmembrane segments spans residues 210–230, 241–261, 314–334, 357–377, 404–424, 502–522, 557–577, and 592–612; these read LYFG…LIGI, DKYV…LEVW, IYLV…YVMM, VLLF…NLLY, VLVF…FVMQ, FLLF…AVLV, LAFE…IALS, and ILTV…LAFV.

Belongs to the anoctamin family.

Its subcellular location is the membrane. Its function is as follows. Does not exhibit calcium-activated chloride channel (CaCC) activity. Can inhibit the activity of ANO1. This chain is Anoctamin-10 (ano10), found in Danio rerio (Zebrafish).